The primary structure comprises 716 residues: tRNA(Met) cytidine acetyltransferase TmcA (716 aa).

Residues Gln192, 217–226, and Arg364 contribute to the ATP site; that span reads GRGKSYVIGL. The region spanning 401–567 is the N-acetyltransferase domain; sequence REVLARDREV…KNVALAKPLD (167 aa). Residues 493 to 495 and 500 to 506 each bind acetyl-CoA; these read IAV and QRRGLGS.

This sequence belongs to the RNA cytidine acetyltransferase family. TmcA subfamily.

The protein localises to the cytoplasm. The enzyme catalyses cytidine(34) in elongator tRNA(Met) + acetyl-CoA + ATP + H2O = N(4)-acetylcytidine(34) in elongator tRNA(Met) + ADP + phosphate + CoA + H(+). Catalyzes the formation of N(4)-acetylcytidine (ac(4)C) at the wobble position of tRNA(Met), by using acetyl-CoA as an acetyl donor and ATP (or GTP). The polypeptide is tRNA(Met) cytidine acetyltransferase TmcA (Aeropyrum pernix (strain ATCC 700893 / DSM 11879 / JCM 9820 / NBRC 100138 / K1)).